Consider the following 263-residue polypeptide: ATP synthase subunit b 2 (263 aa).

Residues 2–22 form a helical membrane-spanning segment; it reads LIDPLTVVAQIINFLILVALL.

Belongs to the ATPase B chain family. As to quaternary structure, F-type ATPases have 2 components, F(1) - the catalytic core - and F(0) - the membrane proton channel. F(1) has five subunits: alpha(3), beta(3), gamma(1), delta(1), epsilon(1). F(0) has four main subunits: a(1), b(1), b'(1) and c(10-14). The alpha and beta chains form an alternating ring which encloses part of the gamma chain. F(1) is attached to F(0) by a central stalk formed by the gamma and epsilon chains, while a peripheral stalk is formed by the delta, b and b' chains.

The protein resides in the cellular thylakoid membrane. Functionally, f(1)F(0) ATP synthase produces ATP from ADP in the presence of a proton or sodium gradient. F-type ATPases consist of two structural domains, F(1) containing the extramembraneous catalytic core and F(0) containing the membrane proton channel, linked together by a central stalk and a peripheral stalk. During catalysis, ATP synthesis in the catalytic domain of F(1) is coupled via a rotary mechanism of the central stalk subunits to proton translocation. Its function is as follows. Component of the F(0) channel, it forms part of the peripheral stalk, linking F(1) to F(0). The chain is ATP synthase subunit b 2 from Acaryochloris marina (strain MBIC 11017).